A 558-amino-acid chain; its full sequence is Cytochrome P450 monooxygenase sdnT (558 aa).

The helical transmembrane segment at 21-41 (IISLTTCFVCAFAVSFVALAI) threads the bilayer. Residues 298 to 317 (QNAGSNTRPKPPKRKQDTQP) are disordered. Residues asparagine 464 and asparagine 495 are each glycosylated (N-linked (GlcNAc...) asparagine). Cysteine 505 is a binding site for heme.

This sequence belongs to the cytochrome P450 family. It depends on heme as a cofactor.

The protein resides in the membrane. The protein operates within antibiotic biosynthesis. In terms of biological role, cytochrome P450 monooxygenase; part of the gene cluster that mediates the biosynthesis of sordarin and hypoxysordarin, glycoside antibiotics with a unique tetracyclic diterpene aglycone structure. First, the geranylgeranyl diphosphate synthase sdnC constructs GGDP from farnesyl diphosphate and isopentenyl diphosphate. The diterpene cyclase sdnA then catalyzes the cyclization of GGDP to afford cycloaraneosene. Cycloaraneosene is then hydroxylated four times by the putative cytochrome P450 monooxygenases sdnB, sdnE, sdnF and sdnH to give a hydroxylated cycloaraneosene derivative such as cycloaraneosene-8,9,13,19-tetraol. Although the order of the hydroxylations is unclear, at least C8, C9 and C13 of the cycloaraneosene skeleton are hydroxylated before the sordaricin formation. Dehydration of the 13-hydroxy group of the hydroxylated cycloaraneosene derivative might be catalyzed by an unassigned hypothetical protein such as sdnG and sdnP to construct the cyclopentadiene moiety. The FAD-dependent oxidoreductase sdnN is proposed to catalyze the oxidation at C9 of the hydroxylated cycloaraneosene derivative and also catalyze the Baeyer-Villiger oxidation to give the lactone intermediate. The presumed lactone intermediate would be hydrolyzed to give an acrolein moiety and a carboxylate moiety. Then, [4+2]cycloaddition would occur between the acrolein moiety and the cyclopentadiene moiety to give sordaricin. SdnN might also be involved in the [4+2]cycloaddition after the hypothesized oxidation to accommodate the oxidized product and prompt the [4+2]cycloaddition. GDP-6-deoxy-D-altrose may be biosynthesized from GDP-D-mannose by the putative GDP-mannose-4,6-dehydratase sdnI and the short-chain dehydrogenase sdnK. The glycosyltransferase sdnJ catalyzes the attachment of 6-deoxy-D-altrose onto the 19-hydroxy group of sordaricin to give 4'-O-demethylsordarin. The methyltransferase sdnD would complete the biosynthesis of sordarin. Sordarin can be further modified into hypoxysordarin. The unique acyl chain at the 3'-hydroxy group of hypoxysordarin would be constructed by an iterative type I PKS sdnO and the trans-acting polyketide methyltransferase sdnL. SdnL would be responsible for the introduction of an alpha-methyl group of the polyketide chain. Alternatively, the beta-lactamase-like protein sdnR might be responsible for the cleavage and transfer of the polyketide chain from the PKS sdnO to sordarin. Two putative cytochrome P450 monooxygenases, sdnQ and sdnT, might catalyze the epoxidations of the polyketide chain to complete the biosynthesis of hypoxysordarin. Transcriptional regulators sdnM and sdnS are presumably encoded for the transcriptional regulation of the expression of the sdn gene cluster. This is Cytochrome P450 monooxygenase sdnT from Sordaria araneosa (Pleurage araneosa).